The sequence spans 2320 residues: Bromodomain and WD repeat-containing protein 1 (2320 aa).

8 WD repeats span residues 184-223 (GHLS…LLST), 226-265 (GHSA…PVAV), 268-311 (GHTG…LKFS), 322-365 (RPGV…AELE), 366-405 (SHTD…WRSI), 424-463 (FMKP…LLHN), 466-506 (GHAD…KMKH), and 514-553 (QGHG…PYEK). Residues 668–691 (QRMGADQDTIPRGLSNGEETPRRG) are disordered. Thr-687 carries the phosphothreonine modification. 3 positions are modified to phosphoserine: Ser-696, Ser-701, and Ser-710. 2 disordered regions span residues 809–867 (NRSW…RYSD) and 895–925 (SEDE…ENLR). Low complexity-rich tracts occupy residues 814–824 (ELSSGNESSSS) and 854–867 (YSES…RYSD). Residues 907–918 (PKRRRKRKKENK) are compositionally biased toward basic residues. Positions 1157 to 1264 (WGQKSRDEEC…DQLLKFIKNQ (108 aa)) constitute a Bromo 1 domain. Residues 1271–1304 (ELSNTSENDEQNAEDLDDSDLPKTSSGRRRVHDG) form a disordered region. Acidic residues predominate over residues 1277–1289 (ENDEQNAEDLDDS). Ser-1289 carries the phosphoserine modification. Residues 1313-1418 (YVESNWKKQC…ALFEEKMKKI (106 aa)) enclose the Bromo 2 domain. The interval 1434 to 1593 (RSQRFKQRQN…TGPVSLANGC (160 aa)) is disordered. A compositionally biased stretch (polar residues) spans 1443–1454 (NCKGDSQPNKSI). A compositionally biased stretch (basic residues) spans 1455–1464 (RNLKPKRLKS). Ser-1475 bears the Phosphoserine mark. Over residues 1475-1496 (SPTQSTSSRTAYLGTHKTSAGI) the composition is skewed to polar residues. Residue Thr-1477 is modified to Phosphothreonine. The residue at position 1479 (Ser-1479) is a Phosphoserine. Over residues 1497 to 1509 (SSGVTSGDSSDSA) the composition is skewed to low complexity. Positions 1520 to 1529 (PITNGSTLSE) are enriched in polar residues. Over residues 1535–1548 (SLATSLSSSASSSS) the composition is skewed to low complexity. Residues 1549 to 1561 (EESKESSRARESS) show a composition bias toward basic and acidic residues. 5 positions are modified to phosphoserine: Ser-1605, Ser-1607, Ser-1678, Ser-1683, and Ser-1686. Disordered stretches follow at residues 1670–1805 (ARKK…KYNT), 1817–1839 (KILS…KCHK), and 1862–1899 (DHGC…KISR). A compositionally biased stretch (basic and acidic residues) spans 1676 to 1687 (HNSEDEQSLKSE). Positions 1701–1712 (PVSSSHTAQSNV) are enriched in polar residues. Composition is skewed to basic and acidic residues over residues 1715-1728 (SENR…DLRV) and 1751-1769 (LKIE…DHAC). Residues Ser-1755, Ser-1756, Ser-1786, Ser-1788, Ser-1793, and Ser-1820 each carry the phosphoserine modification. Over residues 1821–1832 (DSEDSESEEQDR) the composition is skewed to acidic residues. Thr-1867 is subject to Phosphothreonine. Residues Ser-1871, Ser-1904, Ser-1905, Ser-1907, Ser-1910, and Ser-1943 each carry the phosphoserine modification. Position 1955 is a phosphothreonine (Thr-1955). 2 disordered regions span residues 2014–2077 (LNGD…TLAQ) and 2112–2184 (TKVI…TKGK). Phosphoserine is present on residues Ser-2018, Ser-2020, and Ser-2052. Basic and acidic residues-rich tracts occupy residues 2054 to 2069 (EDSK…DRTF) and 2114 to 2139 (VIHD…ENVK). Residues 2140–2165 (ISETTGNSKFRPDTSSKSSDLGSVTE) are compositionally biased toward polar residues. Thr-2164 carries the post-translational modification Phosphothreonine. Phosphoserine is present on residues Ser-2166 and Val-2214.

As to quaternary structure, interacts with SMARCA4. In terms of tissue distribution, ubiquitously expressed. Expressed in respiratory epithelial cells and testis spermatozoa.

It localises to the cytoplasm. The protein resides in the nucleus. Its subcellular location is the cell projection. It is found in the cilium membrane. The protein localises to the cytoskeleton. It localises to the flagellum axoneme. In terms of biological role, may be a transcriptional activator. May be involved in chromatin remodeling. Plays a role in the regulation of cell morphology and cytoskeletal organization. Required in the control of cell shape. This is Bromodomain and WD repeat-containing protein 1 (BRWD1) from Homo sapiens (Human).